We begin with the raw amino-acid sequence, 263 residues long: 2-dehydro-3-deoxyphosphooctonate aldolase (263 aa).

The protein belongs to the KdsA family.

It localises to the cytoplasm. The enzyme catalyses D-arabinose 5-phosphate + phosphoenolpyruvate + H2O = 3-deoxy-alpha-D-manno-2-octulosonate-8-phosphate + phosphate. The protein operates within carbohydrate biosynthesis; 3-deoxy-D-manno-octulosonate biosynthesis; 3-deoxy-D-manno-octulosonate from D-ribulose 5-phosphate: step 2/3. It functions in the pathway bacterial outer membrane biogenesis; lipopolysaccharide biosynthesis. In Wolinella succinogenes (strain ATCC 29543 / DSM 1740 / CCUG 13145 / JCM 31913 / LMG 7466 / NCTC 11488 / FDC 602W) (Vibrio succinogenes), this protein is 2-dehydro-3-deoxyphosphooctonate aldolase.